The sequence spans 226 residues: Ribonuclease 3 (226 aa).

Residues 5 to 127 form the RNase III domain; it reads TFQRGDPIGH…IVAAIYLDCG (123 aa). Glu-40 serves as a coordination point for Mg(2+). Residue Asp-44 is part of the active site. Residues Asp-113 and Glu-116 each contribute to the Mg(2+) site. Residue Glu-116 is part of the active site. Residues 154-224 form the DRBM domain; the sequence is DPKTRLQEWL…ATLVIAQLDS (71 aa).

This sequence belongs to the ribonuclease III family. Homodimer. The cofactor is Mg(2+).

It is found in the cytoplasm. The enzyme catalyses Endonucleolytic cleavage to 5'-phosphomonoester.. Functionally, digests double-stranded RNA. Involved in the processing of primary rRNA transcript to yield the immediate precursors to the large and small rRNAs (23S and 16S). Processes some mRNAs, and tRNAs when they are encoded in the rRNA operon. Processes pre-crRNA and tracrRNA of type II CRISPR loci if present in the organism. The chain is Ribonuclease 3 from Xanthomonas axonopodis pv. citri (strain 306).